The sequence spans 596 residues: Probable translation initiation factor IF-2 (596 aa).

The 218-residue stretch at 3 to 220 (IRSPIVSVLG…MLLGLAQEYL (218 aa)) folds into the tr-type G domain. The segment at 12-19 (GHVDHGKT) is G1. GTP is bound at residue 12–19 (GHVDHGKT). The G2 stretch occupies residues 37–41 (GITQH). The tract at residues 76-79 (DTPG) is G3. GTP is bound by residues 76–80 (DTPGH) and 130–133 (NKID). The G4 stretch occupies residues 130-133 (NKID). The segment at 198–200 (SAK) is G5.

It belongs to the TRAFAC class translation factor GTPase superfamily. Classic translation factor GTPase family. IF-2 subfamily.

Function in general translation initiation by promoting the binding of the formylmethionine-tRNA to ribosomes. Seems to function along with eIF-2. The chain is Probable translation initiation factor IF-2 from Methanobrevibacter smithii (strain ATCC 35061 / DSM 861 / OCM 144 / PS).